We begin with the raw amino-acid sequence, 168 residues long: Photosystem I assembly protein Ycf3 (168 aa).

TPR repeat units lie at residues 35–68, 72–105, and 120–153; these read AFTY…EIDP, SYIL…NPFL, and GEQA…TPGN.

Belongs to the Ycf3 family.

The protein resides in the plastid. It is found in the chloroplast thylakoid membrane. Its function is as follows. Essential for the assembly of the photosystem I (PSI) complex. May act as a chaperone-like factor to guide the assembly of the PSI subunits. The chain is Photosystem I assembly protein Ycf3 from Gossypium barbadense (Sea Island cotton).